The primary structure comprises 459 residues: Cysteine--tRNA ligase (459 aa).

C28 contacts Zn(2+). The short motif at 30–40 is the 'HIGH' region element; the sequence is VTIYDLCHIGH. C209, H234, and E238 together coordinate Zn(2+). Positions 266-270 match the 'KMSKS' region motif; sequence KMSKS. ATP is bound at residue K269.

This sequence belongs to the class-I aminoacyl-tRNA synthetase family. As to quaternary structure, monomer. It depends on Zn(2+) as a cofactor.

The protein resides in the cytoplasm. The enzyme catalyses tRNA(Cys) + L-cysteine + ATP = L-cysteinyl-tRNA(Cys) + AMP + diphosphate. The polypeptide is Cysteine--tRNA ligase (Shewanella pealeana (strain ATCC 700345 / ANG-SQ1)).